The sequence spans 263 residues: Non-functional protein STAY-GREEN, chloroplastic (263 aa).

A chloroplast-targeting transit peptide spans 1–54; it reads MDTLTSAPLLTSKFKPSFSPQQKPCFPHRRRFENGKKKQSIVPVARLFGPAIFE.

This sequence belongs to the staygreen family.

Its subcellular location is the plastid. The protein localises to the chloroplast. In terms of biological role, non-functional protein probably interfering with the disassembling mechanism of the intact light-harvesting complex of photosystem II (LHCII) in the thylakoid membranes. Responsible for a stay-green phenotype. In Pisum sativum (Garden pea), this protein is Non-functional protein STAY-GREEN, chloroplastic (SGR).